We begin with the raw amino-acid sequence, 130 residues long: Small ribosomal subunit protein uS8 (130 aa).

Belongs to the universal ribosomal protein uS8 family. In terms of assembly, part of the 30S ribosomal subunit. Contacts proteins S5 and S12.

Its function is as follows. One of the primary rRNA binding proteins, it binds directly to 16S rRNA central domain where it helps coordinate assembly of the platform of the 30S subunit. This is Small ribosomal subunit protein uS8 from Mannheimia succiniciproducens (strain KCTC 0769BP / MBEL55E).